We begin with the raw amino-acid sequence, 84 residues long: Small ribosomal subunit protein bS16 (84 aa).

The protein belongs to the bacterial ribosomal protein bS16 family.

The protein is Small ribosomal subunit protein bS16 of Ralstonia pickettii (strain 12J).